Consider the following 364-residue polypeptide: Succinyl-diaminopimelate desuccinylase (364 aa).

H66 is a binding site for Zn(2+). Residue D68 is part of the active site. D97 contacts Zn(2+). E127 serves as the catalytic Proton acceptor. 3 residues coordinate Zn(2+): E128, E156, and H341.

Belongs to the peptidase M20A family. DapE subfamily. As to quaternary structure, homodimer. The cofactor is Zn(2+). Co(2+) serves as cofactor.

The enzyme catalyses N-succinyl-(2S,6S)-2,6-diaminopimelate + H2O = (2S,6S)-2,6-diaminopimelate + succinate. It functions in the pathway amino-acid biosynthesis; L-lysine biosynthesis via DAP pathway; LL-2,6-diaminopimelate from (S)-tetrahydrodipicolinate (succinylase route): step 3/3. In terms of biological role, catalyzes the hydrolysis of N-succinyl-L,L-diaminopimelic acid (SDAP), forming succinate and LL-2,6-diaminopimelate (DAP), an intermediate involved in the bacterial biosynthesis of lysine and meso-diaminopimelic acid, an essential component of bacterial cell walls. The protein is Succinyl-diaminopimelate desuccinylase of Wolinella succinogenes (strain ATCC 29543 / DSM 1740 / CCUG 13145 / JCM 31913 / LMG 7466 / NCTC 11488 / FDC 602W) (Vibrio succinogenes).